Reading from the N-terminus, the 319-residue chain is Thioredoxin reductase (319 aa).

37 to 44 serves as a coordination point for FAD; the sequence is ERGVPGGQ. Cys-136 and Cys-139 are oxidised to a cystine. 279-288 lines the FAD pocket; that stretch reads DVRAKSLRQI.

The protein belongs to the class-II pyridine nucleotide-disulfide oxidoreductase family. In terms of assembly, homodimer. FAD is required as a cofactor.

It localises to the cytoplasm. It carries out the reaction [thioredoxin]-dithiol + NADP(+) = [thioredoxin]-disulfide + NADPH + H(+). This is Thioredoxin reductase (trxB) from Listeria innocua serovar 6a (strain ATCC BAA-680 / CLIP 11262).